Reading from the N-terminus, the 334-residue chain is Glyceraldehyde-3-phosphate dehydrogenase (334 aa).

Residues 12 to 13 (TI) and glycine 111 contribute to the NAD(+) site. 140–142 (SCN) serves as a coordination point for D-glyceraldehyde 3-phosphate. Residue cysteine 141 is the Nucleophile of the active site. Arginine 167 serves as a coordination point for NAD(+). Residue 192–193 (HG) participates in D-glyceraldehyde 3-phosphate binding. NAD(+) is bound at residue glutamine 298.

This sequence belongs to the glyceraldehyde-3-phosphate dehydrogenase family. As to quaternary structure, homotetramer.

Its subcellular location is the cytoplasm. It carries out the reaction D-glyceraldehyde 3-phosphate + phosphate + NADP(+) = (2R)-3-phospho-glyceroyl phosphate + NADPH + H(+). The catalysed reaction is D-glyceraldehyde 3-phosphate + phosphate + NAD(+) = (2R)-3-phospho-glyceroyl phosphate + NADH + H(+). It functions in the pathway carbohydrate degradation; glycolysis; pyruvate from D-glyceraldehyde 3-phosphate: step 1/5. This Thermococcus onnurineus (strain NA1) protein is Glyceraldehyde-3-phosphate dehydrogenase.